Here is a 106-residue protein sequence, read N- to C-terminus: UPF0145 protein Pfl01_1745 (106 aa).

Belongs to the UPF0145 family.

This Pseudomonas fluorescens (strain Pf0-1) protein is UPF0145 protein Pfl01_1745.